A 713-amino-acid polypeptide reads, in one-letter code: Probable arginine--tRNA ligase, cytoplasmic (713 aa).

The tract at residues 74–113 (KNKKNGVKATSTSSPSSSTSAPAEKKAKKDGKTGGAPPKQ) is disordered. Residues 81–95 (KATSTSSPSSSTSAP) are compositionally biased toward low complexity. The segment covering 96–105 (AEKKAKKDGK) has biased composition (basic and acidic residues). L-arginine-binding positions include 252 to 254 (SPN), His-263, Tyr-438, Asp-442, and Gln-466. Positions 252–263 (SPNIAKEMHVGH) match the 'HIGH' region motif. The interaction with tRNA stretch occupies residues 583–597 (NTAVYLLYAYTRIQS).

It belongs to the class-I aminoacyl-tRNA synthetase family.

Its subcellular location is the cytoplasm. The protein resides in the cytosol. The catalysed reaction is tRNA(Arg) + L-arginine + ATP = L-arginyl-tRNA(Arg) + AMP + diphosphate. Functionally, forms part of a macromolecular complex that catalyzes the attachment of specific amino acids to cognate tRNAs during protein synthesis. This is Probable arginine--tRNA ligase, cytoplasmic from Caenorhabditis elegans.